A 1380-amino-acid polypeptide reads, in one-letter code: DNA-directed RNA polymerase subunit beta (1380 aa).

The protein belongs to the RNA polymerase beta chain family. The RNAP catalytic core consists of 2 alpha, 1 beta, 1 beta' and 1 omega subunit. When a sigma factor is associated with the core the holoenzyme is formed, which can initiate transcription.

The catalysed reaction is RNA(n) + a ribonucleoside 5'-triphosphate = RNA(n+1) + diphosphate. Its function is as follows. DNA-dependent RNA polymerase catalyzes the transcription of DNA into RNA using the four ribonucleoside triphosphates as substrates. The sequence is that of DNA-directed RNA polymerase subunit beta from Sinorhizobium fredii (strain NBRC 101917 / NGR234).